We begin with the raw amino-acid sequence, 837 residues long: Valine--tRNA ligase (837 aa).

Positions 46–56 (PNLTGTLHIGH) match the 'HIGH' region motif. Positions 514–518 (KMSKS) match the 'KMSKS' region motif. Lysine 517 provides a ligand contact to ATP. The stretch at 767-837 (VDDTTQRLKS…QLIAKLTKAH (71 aa)) forms a coiled coil.

Belongs to the class-I aminoacyl-tRNA synthetase family. ValS type 1 subfamily. As to quaternary structure, monomer.

The protein localises to the cytoplasm. The catalysed reaction is tRNA(Val) + L-valine + ATP = L-valyl-tRNA(Val) + AMP + diphosphate. Functionally, catalyzes the attachment of valine to tRNA(Val). As ValRS can inadvertently accommodate and process structurally similar amino acids such as threonine, to avoid such errors, it has a 'posttransfer' editing activity that hydrolyzes mischarged Thr-tRNA(Val) in a tRNA-dependent manner. In Mycoplasma genitalium (strain ATCC 33530 / DSM 19775 / NCTC 10195 / G37) (Mycoplasmoides genitalium), this protein is Valine--tRNA ligase.